A 1387-amino-acid polypeptide reads, in one-letter code: DNA-directed RNA polymerase subunit beta (1387 aa).

It belongs to the RNA polymerase beta chain family. As to quaternary structure, the RNAP catalytic core consists of 2 alpha, 1 beta, 1 beta' and 1 omega subunit. When a sigma factor is associated with the core the holoenzyme is formed, which can initiate transcription.

It catalyses the reaction RNA(n) + a ribonucleoside 5'-triphosphate = RNA(n+1) + diphosphate. In terms of biological role, DNA-dependent RNA polymerase catalyzes the transcription of DNA into RNA using the four ribonucleoside triphosphates as substrates. In Xanthomonas campestris pv. campestris (strain ATCC 33913 / DSM 3586 / NCPPB 528 / LMG 568 / P 25), this protein is DNA-directed RNA polymerase subunit beta.